Here is a 132-residue protein sequence, read N- to C-terminus: Small ribosomal subunit protein uS8 (132 aa).

Belongs to the universal ribosomal protein uS8 family. In terms of assembly, part of the 30S ribosomal subunit. Contacts proteins S5 and S12.

Its function is as follows. One of the primary rRNA binding proteins, it binds directly to 16S rRNA central domain where it helps coordinate assembly of the platform of the 30S subunit. This Staphylococcus epidermidis (strain ATCC 35984 / DSM 28319 / BCRC 17069 / CCUG 31568 / BM 3577 / RP62A) protein is Small ribosomal subunit protein uS8.